A 456-amino-acid polypeptide reads, in one-letter code: RuvB-like helicase 1 (456 aa).

70 to 77 serves as a coordination point for ATP; that stretch reads GPPGTGKT.

It belongs to the RuvB family. In terms of assembly, forms homohexameric rings. May form a dodecamer with rept made of two stacked hexameric rings. Component of the chromatin remodeling Ino80 complex. Interacts with Myc and rept. Higher expression occurs in primordia of mesoderm, anterior and posterior midgut and cephalic furrow early in gastrulation, as well as in endoderm and mesoderm lineages during germ band extension. Later in development expression is only maintained in endoderm cells. Expressed in thoracic and abdominal segment neural precursors of all embryonic chordotonal organs.

The protein localises to the nucleus. The catalysed reaction is ATP + H2O = ADP + phosphate + H(+). In terms of biological role, acts as a transcriptional coactivator in Wg signaling caused by altered arm signaling. Pont and rept interfere antagonistically with nuclear arm signaling function, and are required to enhance or reduce arm activity, respectively. Also an essential cofactor for the normal function of Myc; required for cellular proliferation and growth. Its function is as follows. Proposed core component of the chromatin remodeling Ino80 complex which is involved in transcriptional regulation, DNA replication and probably DNA repair. This is RuvB-like helicase 1 from Drosophila melanogaster (Fruit fly).